Here is a 395-residue protein sequence, read N- to C-terminus: Secreted aspartyl protease 1 (395 aa).

Residues 1–20 form the signal peptide; sequence MQLSIQAIIGFVVAAGLAVA. A propeptide spans 21 to 88 (removed in mature form); it reads SELPSPMTVN…HLLLDLIDKR (68 aa). Asparagine 41 is a glycosylation site (N-linked (GlcNAc...) asparagine). The region spanning 105-391 is the Peptidase A1 domain; the sequence is WAGDVQFGQS…DMGKNRMGFA (287 aa). Active-site residues include aspartate 121 and aspartate 283. Cysteine 321 and cysteine 352 are disulfide-bonded.

This sequence belongs to the peptidase A1 family.

The protein resides in the secreted. Its activity is regulated as follows. Inhibited by pepstatin A. In terms of biological role, dominant secreted aspartyl protease that has a clear preference for aromatic residues in the P1' position directly adjacent to the cleavage site and, in particular, Trp. In addition, it generally cleaves peptides containing Lys, Arg, Phe, Tyr, or Nle (norleucine) in the P1 position, Nle and Glu at P2, and Arg and Val at P2'. Has important roles in facilitating the interaction of the yeast with the external environment. Is able to rapidly hydrolyze Staphylococcus aureus protein A, an important S.aureus virulence factor involved in immune evasion and biofilm formation. Shows anti-biofilm properties and thus plays a role in inter-kingdom interactions, beneficial for host skin health. The polypeptide is Secreted aspartyl protease 1 (Malassezia globosa (strain ATCC MYA-4612 / CBS 7966) (Dandruff-associated fungus)).